Reading from the N-terminus, the 108-residue chain is uncharacterized protein (108 aa).

Residues 75 to 94 are disordered; that stretch reads TPQVSSFPSSTTSLSHSCTT. Positions 79-94 are enriched in low complexity; it reads SSFPSSTTSLSHSCTT.

This is an uncharacterized protein from Homo sapiens (Human).